A 262-amino-acid polypeptide reads, in one-letter code: Cerebellar degeneration-related antigen 1 (262 aa).

34 repeat units span residues 3–8 (WLEDVD), 9–14 (FLEDVP), 15–20 (LLEDIP), 21–26 (LLEDVP), 27–32 (LLEDVP), 33–38 (LLEDTS), 39–44 (RLEDIN), 45–50 (LMEDMA), 51–56 (LLEDVD), 57–62 (LLEDTD), 63–68 (FLEDLD), 69–74 (FSEAMD), 75–80 (LREDKD), 81–86 (FLEDMD), 87–92 (SLEDMA), 93–98 (LLEDVD), 99–104 (LLEDTD), 105–110 (FLEDPD), 111–116 (FLEAID), 117–122 (LREDKD), 123–128 (FLEDMD), 129–134 (SLEDLE), 135–140 (AIGRCG), 141–146 (FSGRHG), 147–152 (FFGRRR), 153–158 (FSGRPK), 159–164 (LSGRLG), 165–170 (LLGRRG), 171–176 (FSGRLG), 177–182 (GYWKTW), 183–188 (IFWKTW), 189–194 (IFWKTW), 195–200 (IFRKTY), and 201–206 (IGWKTW). Residues 3-140 (WLEDVDFLED…EDLEAIGRCG (138 aa)) are 23 X 6 AA approximate repeats. Residues 141 to 176 (FSGRHGFFGRRRFSGRPKLSGRLGLLGRRGFSGRLG) form a 6 X 6 AA approximate repeats region. Positions 177–206 (GYWKTWIFWKTWIFWKTWIFRKTYIGWKTW) are 5 X 6 AA approximate repeats.

As to expression, brain; predominantly expressed in normal neuroectodermal tissues and in certain malignant tumors.

The polypeptide is Cerebellar degeneration-related antigen 1 (CDR1) (Homo sapiens (Human)).